Consider the following 303-residue polypeptide: DDRGK domain-containing protein 1 (303 aa).

Residues 1 to 2 lie on the Lumenal side of the membrane; sequence MD. Residues 3-23 form a helical membrane-spanning segment; it reads LILLIGIATALLIILLTLYFL. Residues 24 to 303 lie on the Cytoplasmic side of the membrane; the sequence is QKRNAPAETK…TPVTASEGGA (280 aa). 2 disordered regions span residues 31-53 and 84-160; these read ETKAAAQPQRGVPLRAQEGVPRR and AIDP…AEVE. The segment covering 106-160 has biased composition (basic and acidic residues); that stretch reads LDEKMGAKKRAKMEAKEQKRLQREQELHDREQRKVKEAKEEAERKQQDDLDAEVE.

The protein belongs to the DDRGK1 family. In terms of assembly, interacts with Atg9; the interaction is transient.

The protein resides in the endoplasmic reticulum membrane. Functionally, substrate adapter for ufmylation, the covalent attachment of the ubiquitin-like modifier UFM1 to substrate proteins. Required for ufmylation of Atg9; protects the nervous system during aging, possibly by stabilizing Atg9 and supporting its function. The protein is DDRGK domain-containing protein 1 of Drosophila grimshawi (Hawaiian fruit fly).